The chain runs to 440 residues: uncharacterized protein (440 aa).

A signal peptide spans 1-19 (MKKLLLAASIIYFASVSLA).

This is an uncharacterized protein from Rickettsia typhi (strain ATCC VR-144 / Wilmington).